Here is a 163-residue protein sequence, read N- to C-terminus: Photosystem II extrinsic protein V (163 aa).

The first 26 residues, 1–26, serve as a signal peptide directing secretion; that stretch reads MFRRLIGVVVATALLTFQLIVGSATA. Positions 63, 66, 67, and 118 each coordinate heme c.

It belongs to the cytochrome c family. PsbV subfamily. PSII is composed of 1 copy each of membrane proteins PsbA, PsbB, PsbC, PsbD, PsbE, PsbF, PsbH, PsbI, PsbJ, PsbK, PsbL, PsbM, PsbT, PsbX, PsbY, PsbZ, Psb30/Ycf12, peripheral proteins PsbO, CyanoQ (PsbQ), PsbU, PsbV and a large number of cofactors. It forms dimeric complexes. The cofactor is heme c.

The protein localises to the cellular thylakoid membrane. Functionally, one of the extrinsic, lumenal subunits of photosystem II (PSII). PSII is a light-driven water plastoquinone oxidoreductase, using light energy to abstract electrons from H(2)O, generating a proton gradient subsequently used for ATP formation. The extrinsic proteins stabilize the structure of photosystem II oxygen-evolving complex (OEC), the ion environment of oxygen evolution and protect the OEC against heat-induced inactivation. Low-potential cytochrome c that plays a role in the OEC of PSII. In Nostoc sp. (strain PCC 7120 / SAG 25.82 / UTEX 2576), this protein is Photosystem II extrinsic protein V.